Here is a 366-residue protein sequence, read N- to C-terminus: Probable glucuronokinase 2 (366 aa).

126–136 (PRQTGLSGSSA) is an ATP binding site. The Proton acceptor role is filled by D179.

The protein belongs to the GHMP kinase family. Requires Mg(2+) as cofactor. Mn(2+) is required as a cofactor. The cofactor is Co(2+).

It catalyses the reaction D-glucuronate + ATP = 1-phospho-alpha-D-glucuronate + ADP + H(+). In terms of biological role, sugar-1-kinase with a strict substrate specificity for D-glucuronic acid and ATP. Involved in the biosynthesis of UDP-glucuronic acid (UDP-GlcA), providing nucleotide sugars for cell-wall polymers. May be also involved in a salvage pathway for glucuronic acid. The polypeptide is Probable glucuronokinase 2 (GLCAK2) (Arabidopsis thaliana (Mouse-ear cress)).